We begin with the raw amino-acid sequence, 235 residues long: UDP-2,3-diacylglucosamine hydrolase (235 aa).

The Mn(2+) site is built by aspartate 9, histidine 11, aspartate 42, asparagine 80, and histidine 115. 80–81 (NR) is a substrate binding site. Substrate-binding residues include aspartate 123, serine 161, lysine 165, lysine 168, and histidine 196. Mn(2+) is bound by residues histidine 196 and histidine 198.

The protein belongs to the LpxH family. The cofactor is Mn(2+).

The protein localises to the cell inner membrane. The enzyme catalyses UDP-2-N,3-O-bis[(3R)-3-hydroxytetradecanoyl]-alpha-D-glucosamine + H2O = 2-N,3-O-bis[(3R)-3-hydroxytetradecanoyl]-alpha-D-glucosaminyl 1-phosphate + UMP + 2 H(+). It functions in the pathway glycolipid biosynthesis; lipid IV(A) biosynthesis; lipid IV(A) from (3R)-3-hydroxytetradecanoyl-[acyl-carrier-protein] and UDP-N-acetyl-alpha-D-glucosamine: step 4/6. Its function is as follows. Hydrolyzes the pyrophosphate bond of UDP-2,3-diacylglucosamine to yield 2,3-diacylglucosamine 1-phosphate (lipid X) and UMP by catalyzing the attack of water at the alpha-P atom. Involved in the biosynthesis of lipid A, a phosphorylated glycolipid that anchors the lipopolysaccharide to the outer membrane of the cell. The sequence is that of UDP-2,3-diacylglucosamine hydrolase from Actinobacillus succinogenes (strain ATCC 55618 / DSM 22257 / CCUG 43843 / 130Z).